We begin with the raw amino-acid sequence, 81 residues long: Antitoxin VapB28 (81 aa).

Its function is as follows. Antitoxin component of a type II toxin-antitoxin (TA) system. The chain is Antitoxin VapB28 (vapB28) from Mycobacterium tuberculosis (strain CDC 1551 / Oshkosh).